Consider the following 398-residue polypeptide: Dual-specificity RNA methyltransferase RlmN (398 aa).

Residue Glu-119 is the Proton acceptor of the active site. Residues 125–364 (EEERATLCVS…TIVRKTRGDD (240 aa)) form the Radical SAM core domain. Cysteines 132 and 369 form a disulfide. [4Fe-4S] cluster-binding residues include Cys-139, Cys-143, and Cys-146. S-adenosyl-L-methionine-binding positions include 193-194 (GE), Ser-225, 247-249 (SLH), and Asn-326. Cys-369 (S-methylcysteine intermediate) is an active-site residue.

It belongs to the radical SAM superfamily. RlmN family. It depends on [4Fe-4S] cluster as a cofactor.

The protein localises to the cytoplasm. The enzyme catalyses adenosine(2503) in 23S rRNA + 2 reduced [2Fe-2S]-[ferredoxin] + 2 S-adenosyl-L-methionine = 2-methyladenosine(2503) in 23S rRNA + 5'-deoxyadenosine + L-methionine + 2 oxidized [2Fe-2S]-[ferredoxin] + S-adenosyl-L-homocysteine. The catalysed reaction is adenosine(37) in tRNA + 2 reduced [2Fe-2S]-[ferredoxin] + 2 S-adenosyl-L-methionine = 2-methyladenosine(37) in tRNA + 5'-deoxyadenosine + L-methionine + 2 oxidized [2Fe-2S]-[ferredoxin] + S-adenosyl-L-homocysteine. Its function is as follows. Specifically methylates position 2 of adenine 2503 in 23S rRNA and position 2 of adenine 37 in tRNAs. m2A2503 modification seems to play a crucial role in the proofreading step occurring at the peptidyl transferase center and thus would serve to optimize ribosomal fidelity. The protein is Dual-specificity RNA methyltransferase RlmN of Pectobacterium atrosepticum (strain SCRI 1043 / ATCC BAA-672) (Erwinia carotovora subsp. atroseptica).